The sequence spans 183 residues: Translation initiation factor IF-3 (183 aa).

The protein belongs to the IF-3 family. In terms of assembly, monomer.

It is found in the cytoplasm. Functionally, IF-3 binds to the 30S ribosomal subunit and shifts the equilibrium between 70S ribosomes and their 50S and 30S subunits in favor of the free subunits, thus enhancing the availability of 30S subunits on which protein synthesis initiation begins. The chain is Translation initiation factor IF-3 from Aliivibrio salmonicida (strain LFI1238) (Vibrio salmonicida (strain LFI1238)).